The following is a 124-amino-acid chain: MATVNQLVRKPRARKVAKSNVPALEACPQKRGVCTRVYTTTPKKPNSALRKVCRVRLTNGFEVTSYIGGEGHNLQEHSVILIRGGRVRDLPGVRYHTVRGALDCSGVKDRKQARSKYGVKRPKA.

3-methylthioaspartic acid is present on Asp89. N6-acetyllysine is present on Lys108.

It belongs to the universal ribosomal protein uS12 family. Part of the 30S ribosomal subunit. Contacts proteins S8 and S17. May interact with IF1 in the 30S initiation complex.

With S4 and S5 plays an important role in translational accuracy. Its function is as follows. Interacts with and stabilizes bases of the 16S rRNA that are involved in tRNA selection in the A site and with the mRNA backbone. Located at the interface of the 30S and 50S subunits, it traverses the body of the 30S subunit contacting proteins on the other side and probably holding the rRNA structure together. The combined cluster of proteins S8, S12 and S17 appears to hold together the shoulder and platform of the 30S subunit. In Escherichia coli O6:K15:H31 (strain 536 / UPEC), this protein is Small ribosomal subunit protein uS12.